Consider the following 347-residue polypeptide: MDNKLGLEIIEVVEQAAIAAARWMGKGDNKTADQVAVEAMREKLNQIPMRGRIVIGEGTRDEAPMLYIGEEVGICTRPDAEQFCRVEELVEIDIAVDPCEGTNLVAKGQNGSMAVLAISEKGGLLHAPDIYMQKLAAPPQAKGKVHIDYPPEKNLKIIAESLDREISDLTVVVMDRKRHLDLIRQIREAGARVKLITDGDISAALSAGFNGTGIHALMGIGAAPEGVISAAALRCLGAHFQGRLIYDPEVVQAGTYLPPVEETRRELKEKGIEDPDKVWECEELASGKEVLFAATGITDGDLMRGVRFFGGGARTETLVISSQSRTVRFVDTIHMKDGQQPRGLQLR.

Asp33, Glu57, Asp97, and Glu100 together coordinate Mn(2+). Substrate-binding positions include 100 to 102 (EGT), Tyr131, 176 to 178 (RKR), and 198 to 200 (DGD). Position 225 (Glu225) interacts with Mn(2+).

It belongs to the FBPase class 2 family. As to quaternary structure, homotetramer. The cofactor is Mn(2+).

The enzyme catalyses beta-D-fructose 1,6-bisphosphate + H2O = beta-D-fructose 6-phosphate + phosphate. The catalysed reaction is D-sedoheptulose 1,7-bisphosphate + H2O = D-sedoheptulose 7-phosphate + phosphate. It participates in carbohydrate biosynthesis; Calvin cycle. Functionally, catalyzes the hydrolysis of fructose 1,6-bisphosphate (Fru 1,6-P2) and sedoheptulose 1,7-bisphosphate (Sed 1,7-P2) to fructose 6-phosphate and sedoheptulose 7-phosphate, respectively. In Synechococcus sp. (strain JA-2-3B'a(2-13)) (Cyanobacteria bacterium Yellowstone B-Prime), this protein is D-fructose 1,6-bisphosphatase class 2/sedoheptulose 1,7-bisphosphatase.